Consider the following 503-residue polypeptide: Maturase K (503 aa).

The protein belongs to the intron maturase 2 family. MatK subfamily.

The protein localises to the plastid. It is found in the chloroplast. Usually encoded in the trnK tRNA gene intron. Probably assists in splicing its own and other chloroplast group II introns. The sequence is that of Maturase K from Caragana arborescens (Siberian pea tree).